A 156-amino-acid polypeptide reads, in one-letter code: Translation initiation factor IF-1, chloroplastic (156 aa).

A chloroplast-targeting transit peptide spans 1–81 (MASLSWWNPA…RRTTSIQCLS (81 aa)). The disordered stretch occupies residues 51 to 79 (KSLLVKTQQQSKKKKNNSTNSRRTTSIQC). Positions 67–76 (NSTNSRRTTS) are enriched in low complexity. In terms of domain architecture, S1-like spans 82–151 (QEQKWTHEGS…SKGRIIYRLR (70 aa)).

Belongs to the IF-1 family. Component of the 30S ribosomal translation pre-initiation complex which assembles on the 30S ribosome in the order IF-2 and IF-3, IF-1 and N-formylmethionyl-tRNA(fMet); mRNA recruitment can occur at any time during PIC assembly.

It is found in the plastid. The protein localises to the chloroplast. Its function is as follows. One of the essential components for the initiation of protein synthesis. Stabilizes the binding of IF-2 and IF-3 on the 30S subunit to which N-formylmethionyl-tRNA(fMet) subsequently binds. Helps modulate mRNA selection, yielding the 30S pre-initiation complex (PIC). Upon addition of the 50S ribosomal subunit IF-1, IF-2 and IF-3 are released leaving the mature 70S translation initiation complex. This chain is Translation initiation factor IF-1, chloroplastic (infA), found in Solanum lycopersicum (Tomato).